The sequence spans 101 residues: uncharacterized protein (101 aa).

Low complexity predominate over residues 65-79 (QEAAAPAGPQEPAEA). Residues 65-101 (QEAAAPAGPQEPAEASGDAGKKEEVEEEEIEIDFGMF) are disordered. The span at 89 to 101 (VEEEEIEIDFGMF) shows a compositional bias: acidic residues.

This is an uncharacterized protein from Encephalitozoon cuniculi (strain GB-M1) (Microsporidian parasite).